Reading from the N-terminus, the 610-residue chain is Elongation factor 4 (610 aa).

A tr-type G domain is found at 13 to 195; that stretch reads SHIRNFSIVA…AIVNRLPAPK (183 aa). GTP contacts are provided by residues 25 to 30 and 142 to 145; these read DHGKST and NKID.

This sequence belongs to the TRAFAC class translation factor GTPase superfamily. Classic translation factor GTPase family. LepA subfamily.

Its subcellular location is the cell inner membrane. It catalyses the reaction GTP + H2O = GDP + phosphate + H(+). Functionally, required for accurate and efficient protein synthesis under certain stress conditions. May act as a fidelity factor of the translation reaction, by catalyzing a one-codon backward translocation of tRNAs on improperly translocated ribosomes. Back-translocation proceeds from a post-translocation (POST) complex to a pre-translocation (PRE) complex, thus giving elongation factor G a second chance to translocate the tRNAs correctly. Binds to ribosomes in a GTP-dependent manner. This is Elongation factor 4 from Rhizobium leguminosarum bv. trifolii (strain WSM2304).